The chain runs to 186 residues: Peptidyl-tRNA hydrolase (186 aa).

Y15 is a tRNA binding site. H20 functions as the Proton acceptor in the catalytic mechanism. The tRNA site is built by Y64, N66, and N112.

Belongs to the PTH family. In terms of assembly, monomer.

The protein resides in the cytoplasm. It catalyses the reaction an N-acyl-L-alpha-aminoacyl-tRNA + H2O = an N-acyl-L-amino acid + a tRNA + H(+). Functionally, hydrolyzes ribosome-free peptidyl-tRNAs (with 1 or more amino acids incorporated), which drop off the ribosome during protein synthesis, or as a result of ribosome stalling. Catalyzes the release of premature peptidyl moieties from peptidyl-tRNA molecules trapped in stalled 50S ribosomal subunits, and thus maintains levels of free tRNAs and 50S ribosomes. This chain is Peptidyl-tRNA hydrolase, found in Azobacteroides pseudotrichonymphae genomovar. CFP2.